The following is a 1156-amino-acid chain: MHRRSSGSPVEDDAEDSPLVSRSPTESTAHGPNNNAFETAEKSRSQIAKRGTSFDLRRDNGASTPRSRNSGLWRTPSSSSTSSTTAMATASTETKSSSASFLMPLASQRLPMGTSPESSRFRSSRLRSPWTCSILTALTTLVASVFLFFIVRSFSARQAGEDGCGIPVMSPTFLHMVGFDTEHTRFASKYNLYLYREEGVDFYNQENLGLNGAPVLFLPGNAGSYRQVRSLAAEASRHFHDVVRHDQERIKAGTRSLDFFMIDFNEDMAAFHGQTLLDQAEYVNEAIAYILSLYHDPKRSRRDPELPDPSSVILIGHSMGGIVARTALTMSNYQANSVNTIVTMSAPHAKPPVSFDSDIVHTYKQINDYWREAYSQTWANNNPLWHVTLISIAGGSRDTVVPSDYASISSLVPETHGFTVFTSSIPDVWIGVDHLSITWCDQFRKAIIKSLFDIIDVRRASQTKPRAERMRIFKKWYLTGLEPVAERTLSQKEPNTLLTLEDKSNSILPQGQRLILRELGHRSGPKVYLLPVPPQGVSGKKFTLLTDQRFDKTGEHGNLEVLFCSVFPLQNGKFATVFSMNMDFSGGNTGSTRLACKNAAEDGIHLPASTPASKYPFDRVQPFSYLQYELEDLSEHQFVAIVDKADSPTKGWVLAEFSDSSDAVIRVRGGLGGLLSAGLKMRLPANRPMLTEIKIPALHSSLLDYKLQIVRHNHDKRQELFAPLLRQSISDPHESKFFVNVDKVDVNLHGVAPFMPPPLREQATLGGVSFQLWTDPSCGSTVDVSLKVDIAGSLGELVMRYRTVFAAFPLLVVALVLRKQFQMYDETGYFITFAEGLDTALRSSFPILLLAMSLLASSLATSAQIPPSDEPFQWPVNATETPIDFTKNDLLLGSQDAFFWFLVPVFGLISVGVCVILNYIALILLSVLSFIYGCLRTRSGYIKRNEKGTPIFSAPTARRRMINTAILLVLVSTLIPYQFAYMVACIVQLATCVRAQWHAKETRSTAHYNFSNYAHSIFILMLWILPINILVLLVWAHNLVVHWFMPFSSHHNVLSIMPFILLVETMTSGAMIPRVTTRLKHVTSMILFAIAVYSAVYGVSYAYLLHHLANILAAWFVVIYFFSSGFSLRRLWLILEGDDATQGKSEPGGSHQKKKP.

The disordered stretch occupies residues Met1–Lys95. Composition is skewed to polar residues over residues Val20–Phe37 and Gly61–Leu72. The span at Thr75 to Lys95 shows a compositional bias: low complexity. Residues Thr131–Val151 form a helical membrane-spanning segment. Ser318 is a catalytic residue. Transmembrane regions (helical) follow at residues Leu797–Leu817 and Phe845–Ile865. An N-linked (GlcNAc...) asparagine glycan is attached at Asn877. Helical transmembrane passes span Ala897–Leu917 and Ile966–Ile986. A glycan (N-linked (GlcNAc...) asparagine) is linked at Asn1009. Transmembrane regions (helical) follow at residues Ser1016–Ala1036, Val1053–Pro1073, His1081–Tyr1101, and Ala1102–Phe1122.

It belongs to the GPI inositol-deacylase family.

It is found in the endoplasmic reticulum membrane. In terms of biological role, involved in inositol deacylation of GPI-anchored proteins which plays important roles in the quality control and ER-associated degradation of GPI-anchored proteins. The protein is GPI inositol-deacylase (bst1) of Aspergillus fumigatus (strain ATCC MYA-4609 / CBS 101355 / FGSC A1100 / Af293) (Neosartorya fumigata).